The primary structure comprises 156 residues: Putative pre-16S rRNA nuclease (156 aa).

The protein belongs to the YqgF nuclease family.

It is found in the cytoplasm. Could be a nuclease involved in processing of the 5'-end of pre-16S rRNA. This Bartonella tribocorum (strain CIP 105476 / IBS 506) protein is Putative pre-16S rRNA nuclease.